Here is a 202-residue protein sequence, read N- to C-terminus: MTRSHNHSATLTTPDFDQARAEAAVRELLIAVGEDPDREGLLDTPARVARSYREIFAGLYTDPDEVLTTMFDEQHDEMVLVKDIPMYSTCEHHLVSFHGVAHVGYIPGVDGRVTGLSKLARVVDLYAKRPQVQERLTSQIADALMRKLDPRGAIVVIEAEHLCMAMRGIRKPGAVTTTSAVRGQFKTDKASRAEALDLILRK.

Zn(2+) contacts are provided by Cys90, His93, and Cys163.

The protein belongs to the GTP cyclohydrolase I family. As to quaternary structure, homomer.

It catalyses the reaction GTP + H2O = 7,8-dihydroneopterin 3'-triphosphate + formate + H(+). Its pathway is cofactor biosynthesis; 7,8-dihydroneopterin triphosphate biosynthesis; 7,8-dihydroneopterin triphosphate from GTP: step 1/1. The sequence is that of GTP cyclohydrolase 1 from Mycolicibacterium gilvum (strain PYR-GCK) (Mycobacterium gilvum (strain PYR-GCK)).